Consider the following 242-residue polypeptide: Small ribosomal subunit protein uS3 (242 aa).

In terms of domain architecture, KH type-2 spans 39–109 (IRQYVKATLA…QIRINVVEVT (71 aa)). The interval 220–242 (KVNQPKRRQQKRRQQYDDRSNEG) is disordered. Residues 223 to 232 (QPKRRQQKRR) show a composition bias toward basic residues. Residues 233-242 (QQYDDRSNEG) are compositionally biased toward basic and acidic residues.

It belongs to the universal ribosomal protein uS3 family. Part of the 30S ribosomal subunit. Forms a tight complex with proteins S10 and S14.

In terms of biological role, binds the lower part of the 30S subunit head. Binds mRNA in the 70S ribosome, positioning it for translation. This chain is Small ribosomal subunit protein uS3, found in Trichodesmium erythraeum (strain IMS101).